The sequence spans 129 residues: Photosystem II extrinsic protein V (129 aa).

Heme c-binding residues include C35, C38, H39, and H90.

This sequence belongs to the cytochrome c family. PsbV subfamily. PSII is composed of 1 copy each of membrane proteins PsbA, PsbB, PsbC, PsbD, PsbE, PsbF, PsbH, PsbI, PsbJ, PsbK, PsbL, PsbM, PsbT, PsbX, PsbY, PsbZ, Psb30/Ycf12, peripheral proteins PsbO, CyanoQ (PsbQ), PsbU, PsbV and a large number of cofactors. It forms dimeric complexes. Homodimer in crystal structure. Heme c serves as cofactor.

The protein localises to the cellular thylakoid membrane. Its function is as follows. One of the extrinsic, lumenal subunits of photosystem II (PSII). PSII is a light-driven water plastoquinone oxidoreductase, using light energy to abstract electrons from H(2)O, generating a proton gradient subsequently used for ATP formation. The extrinsic proteins stabilize the structure of photosystem II oxygen-evolving complex (OEC), the ion environment of oxygen evolution and protect the OEC against heat-induced inactivation. Low-potential cytochrome c that plays a role in the OEC of PSII. The sequence is that of Photosystem II extrinsic protein V from Limnospira maxima (Arthrospira maxima).